An 81-amino-acid chain; its full sequence is Small ribosomal subunit protein uS17 (81 aa).

This sequence belongs to the universal ribosomal protein uS17 family. In terms of assembly, part of the 30S ribosomal subunit.

In terms of biological role, one of the primary rRNA binding proteins, it binds specifically to the 5'-end of 16S ribosomal RNA. The protein is Small ribosomal subunit protein uS17 of Trichormus variabilis (strain ATCC 29413 / PCC 7937) (Anabaena variabilis).